The chain runs to 218 residues: Sodium channel regulatory subunit beta-1 (218 aa).

A signal peptide spans 1-18; it reads MGTLLALVVGAALVSSAW. Residues 19-157 lie on the Extracellular side of the membrane; the sequence is GGCVEVDSET…DKANRDMASI (139 aa). Intrachain disulfides connect Cys21/Cys43 and Cys40/Cys121. Residues 22–150 enclose the Ig-like C2-type domain; the sequence is VEVDSETEAV…KIHIEVVDKA (129 aa). N-linked (GlcNAc...) asparagine glycans are attached at residues Asn93, Asn110, Asn114, and Asn135. The helical transmembrane segment at 158-179 threads the bilayer; sequence VSEIMMYVLIVVLTIWLVAEMV. The Cytoplasmic portion of the chain corresponds to 180-218; the sequence is YCYKKIAAATEAAAQENASEYLAITSESKENCTGVQVAE.

The protein belongs to the sodium channel auxiliary subunit SCN1B (TC 8.A.17) family. In terms of assembly, a voltage-gated sodium (Nav) channel consists of an ion-conducting pore-forming alpha subunit functional on its own that is regulated by one or more beta subunits. Interacts with SCN1A; regulatory subunit of SCN1A/Nav1.1. Interacts with SCN3A; regulatory subunit of SCN3A/Nav1.3. Interacts with SCN4A; regulatory subunit of SCN4A/Nav1.4. Interacts with SCN5A; regulatory subunit of SCN5A/Nav1.5. Interacts with SCN8A; regulatory subunit of SCN8A/Nav1.6. Interacts with SCN9A; regulatory subunit of SCN9A/Nav1.7. Interacts with SCN10A; regulatory subunit of SCN10A/Nav1.8. Interacts with NFASC. Interacts with TMEM65.

Its subcellular location is the cell membrane. The protein resides in the perikaryon. The protein localises to the cell projection. It localises to the axon. Regulatory subunit of multiple voltage-gated sodium (Nav) channels directly mediating the depolarization of excitable membranes. Navs, also called VGSCs (voltage-gated sodium channels) or VDSCs (voltage-dependent sodium channels), operate by switching between closed and open conformations depending on the voltage difference across the membrane. In the open conformation they allow Na(+) ions to selectively pass through the pore, along their electrochemical gradient. The influx of Na+ ions provokes membrane depolarization, initiating the propagation of electrical signals throughout cells and tissues. The accessory beta subunits participate in localization and functional modulation of the Nav channels. Modulates the activity of SCN1A/Nav1.1, SCN2A/Nav1.2, SCN3A/Nav1.3, SCN4A/Nav1.4, SCN5A/Nav1.5, SCN8A/Nav1.6, SCN9A/Nav1.7 and SCN10A/Nav1.8. This chain is Sodium channel regulatory subunit beta-1, found in Canis lupus familiaris (Dog).